Here is a 245-residue protein sequence, read N- to C-terminus: Suppressor of aph-1 (245 aa).

The 49-residue stretch at 12-60 folds into the GYF domain; it reads DTKWHYLGPDSEKYGPYMSKDMLFWLQAGYFNDGLQLKTENEPNYHTLG. The disordered stretch occupies residues 126–166; the sequence is NQNGPPMGAQMHSQPPSEPIDAGSLSHTPDSENETRLNEQT.

In terms of biological role, involved in negative regulation of early and late embryonic Notch signaling. This is Suppressor of aph-1 from Caenorhabditis elegans.